The primary structure comprises 276 residues: Undecaprenyl-diphosphatase (276 aa).

7 helical membrane passes run 40–60 (GLAF…TFFW), 98–118 (WLII…KDAI), 121–141 (IFRG…VLYY), 155–175 (MSFK…FPGI), 200–220 (FLLS…DIAT), 227–247 (VLLA…KLLM), and 255–275 (LDIF…LSVV).

Belongs to the UppP family.

The protein resides in the cell membrane. It catalyses the reaction di-trans,octa-cis-undecaprenyl diphosphate + H2O = di-trans,octa-cis-undecaprenyl phosphate + phosphate + H(+). Functionally, catalyzes the dephosphorylation of undecaprenyl diphosphate (UPP). This chain is Undecaprenyl-diphosphatase, found in Methanosphaera stadtmanae (strain ATCC 43021 / DSM 3091 / JCM 11832 / MCB-3).